The chain runs to 179 residues: Large ribosomal subunit protein uL5 (179 aa).

The protein belongs to the universal ribosomal protein uL5 family. In terms of assembly, part of the 50S ribosomal subunit; part of the 5S rRNA/L5/L18/L25 subcomplex. Contacts the 5S rRNA and the P site tRNA. Forms a bridge to the 30S subunit in the 70S ribosome.

This is one of the proteins that bind and probably mediate the attachment of the 5S RNA into the large ribosomal subunit, where it forms part of the central protuberance. In the 70S ribosome it contacts protein S13 of the 30S subunit (bridge B1b), connecting the 2 subunits; this bridge is implicated in subunit movement. Contacts the P site tRNA; the 5S rRNA and some of its associated proteins might help stabilize positioning of ribosome-bound tRNAs. The chain is Large ribosomal subunit protein uL5 from Stutzerimonas stutzeri (strain A1501) (Pseudomonas stutzeri).